The following is a 398-amino-acid chain: Phosphoglycerate kinase (398 aa).

Residues 21 to 23 (DIN), R37, 60 to 63 (HQGR), R117, and R157 each bind substrate. ATP is bound by residues E332 and 357-360 (GGDT).

It belongs to the phosphoglycerate kinase family. As to quaternary structure, monomer.

Its subcellular location is the cytoplasm. It carries out the reaction (2R)-3-phosphoglycerate + ATP = (2R)-3-phospho-glyceroyl phosphate + ADP. Its pathway is carbohydrate degradation; glycolysis; pyruvate from D-glyceraldehyde 3-phosphate: step 2/5. This is Phosphoglycerate kinase from Halobacterium salinarum (strain ATCC 29341 / DSM 671 / R1).